A 313-amino-acid polypeptide reads, in one-letter code: Aspartate carbamoyltransferase catalytic subunit (313 aa).

Carbamoyl phosphate contacts are provided by Arg59 and Thr60. L-aspartate is bound at residue Lys87. Arg109, His137, and Gln140 together coordinate carbamoyl phosphate. Residues Arg170 and Arg224 each coordinate L-aspartate. Positions 265 and 266 each coordinate carbamoyl phosphate.

The protein belongs to the aspartate/ornithine carbamoyltransferase superfamily. ATCase family. Heterododecamer (2C3:3R2) of six catalytic PyrB chains organized as two trimers (C3), and six regulatory PyrI chains organized as three dimers (R2).

It catalyses the reaction carbamoyl phosphate + L-aspartate = N-carbamoyl-L-aspartate + phosphate + H(+). Its pathway is pyrimidine metabolism; UMP biosynthesis via de novo pathway; (S)-dihydroorotate from bicarbonate: step 2/3. Functionally, catalyzes the condensation of carbamoyl phosphate and aspartate to form carbamoyl aspartate and inorganic phosphate, the committed step in the de novo pyrimidine nucleotide biosynthesis pathway. This is Aspartate carbamoyltransferase catalytic subunit from Agrobacterium fabrum (strain C58 / ATCC 33970) (Agrobacterium tumefaciens (strain C58)).